Reading from the N-terminus, the 414-residue chain is MAALFVSLLALTSLVPVQGAATVPQTDYAKRAERVLKSAPLIDGHNDLLYAIRRSTNDQIYDGKLPFETSLKGHTDLPRMRKGRMGGQFWSVFIACPSDPNAPINTPKFATRDTLEQIDVARRLVDKYSKDLMYCDNPGCAKRAFREGKIGSFIGIEGGHQVGSSIAALRQAFYAGARYMTLTHNCDNAWATAASTVRAGKPDLGMTDFGPALIKEMNRLGMLVDLSHVSHQTMRDVLKITKAPVIFSHSSAYEVSKHLRNVPDDVLKTVAKNNGVVMVTFVSSFVKVDDPDSADVNTVVKHIFHIAEVAGWDHVGLGGDYDGTTELPKGLEDVSKYPYLIEKVLEAGATEEQARKLVGENVLRVWTEVEQIAKKIQRSGVLPVEEVWKGRNGTALSERSTFIEGPAPLEYGCD.

An N-terminal signal peptide occupies residues 1–20; it reads MAALFVSLLALTSLVPVQGA. The Zn(2+) site is built by His-45, Asp-47, and Glu-157. A disulfide bridge connects residues Cys-96 and Cys-186. His-184 is a binding site for substrate. Positions 228 and 249 each coordinate Zn(2+). Positions 260 and 320 each coordinate substrate. The N-linked (GlcNAc...) asparagine glycan is linked to Asn-392.

This sequence belongs to the metallo-dependent hydrolases superfamily. Peptidase M19 family. The cofactor is Zn(2+).

It carries out the reaction an L-aminoacyl-L-amino acid + H2O = 2 an L-alpha-amino acid. Its function is as follows. Hydrolyzes a wide range of dipeptides. The chain is Putative dipeptidase TRV_05564 from Trichophyton verrucosum (strain HKI 0517).